Here is a 348-residue protein sequence, read N- to C-terminus: Nuclear receptor subfamily 1 group I member 3 (348 aa).

The segment at residues 8-83 (PRSCMVCGDR…AGMKKEMILS (76 aa)) is a DNA-binding region (nuclear receptor). An NR C4-type zinc finger spans residues 11–31 (CMVCGDRATGYHFHALTCEGC). Thr-38 carries the phosphothreonine; by PKC modification. The NR C4-type zinc finger occupies 47 to 71 (CPFAGSCKVNKAQRRHCPACRLQKC). Residues 109-348 (GQQELVQTLL…MMPLLQEICS (240 aa)) form the NR LBD domain.

This sequence belongs to the nuclear hormone receptor family. NR1 subfamily. As to quaternary structure, heterodimer of NR1I3 and RXR. Interacts with PSMC4. Interacts with ECT2. Directly interacts with DNAJC7; this complex may also include HSP90. Interacts with CRY1. Interacts with CRY2 in a ligand-dependent manner. Post-translationally, phosphorylated at Thr-38 by PKC, dephosphorylation of Thr-38 is required for nuclear translocation and activation.

It is found in the nucleus. It localises to the cytoplasm. Its subcellular location is the cytoskeleton. In terms of biological role, binds and transactivates the retinoic acid response elements that control expression of the retinoic acid receptor beta 2 and alcohol dehydrogenase 3 genes. Transactivates both the phenobarbital responsive element module of the human CYP2B6 gene and the CYP3A4 xenobiotic response element. In Pusa sibirica (Baikal seal), this protein is Nuclear receptor subfamily 1 group I member 3 (NR1I3).